Reading from the N-terminus, the 203-residue chain is Guanylate kinase (203 aa).

The 179-residue stretch at 3-181 folds into the Guanylate kinase-like domain; the sequence is GTLYIVSAPS…ALDDLKAIFR (179 aa). 10–17 serves as a coordination point for ATP; the sequence is APSGAGKT.

The protein belongs to the guanylate kinase family.

The protein localises to the cytoplasm. It catalyses the reaction GMP + ATP = GDP + ADP. In terms of biological role, essential for recycling GMP and indirectly, cGMP. The polypeptide is Guanylate kinase (gmk) (Pseudomonas aeruginosa (strain ATCC 15692 / DSM 22644 / CIP 104116 / JCM 14847 / LMG 12228 / 1C / PRS 101 / PAO1)).